The following is a 204-amino-acid chain: Large ribosomal subunit protein eL15 (204 aa).

This sequence belongs to the eukaryotic ribosomal protein eL15 family.

The sequence is that of Large ribosomal subunit protein eL15 (RpL15) from Anopheles gambiae (African malaria mosquito).